Reading from the N-terminus, the 238-residue chain is uncharacterized protein (238 aa).

The next 6 membrane-spanning stretches (helical) occupy residues 24 to 44, 78 to 98, 109 to 129, 156 to 176, 188 to 208, and 216 to 236; these read IFIA…YMKN, GFLL…LPGL, ILFI…IILV, FILL…IQVI, MYAY…IITP, and IIMS…LKIL.

This sequence belongs to the TatC family.

Its subcellular location is the plastid. The protein resides in the chloroplast membrane. This is an uncharacterized protein from Gracilaria tenuistipitata var. liui (Red alga).